The sequence spans 784 residues: N-alpha-acetyltransferase 35, NatC auxiliary subunit homolog (784 aa).

3 disordered regions span residues 1 to 23 (MYPS…VAEP), 320 to 353 (NTLD…PPAF), and 606 to 630 (SKTQ…NKKT). Basic residues predominate over residues 617-630 (KNRKAAKPKKNKKT).

The protein belongs to the MAK10 family. As to quaternary structure, component of the N-terminal acetyltransferase C (NatC) complex, which is composed of Naa35, Sbat/Naa38 and Naa30A.

It localises to the cytoplasm. In terms of biological role, auxillary component of the N-terminal acetyltransferase C (NatC) complex which catalyzes acetylation of N-terminal methionine residues. The polypeptide is N-alpha-acetyltransferase 35, NatC auxiliary subunit homolog (Drosophila melanogaster (Fruit fly)).